Consider the following 349-residue polypeptide: Early nodulin-like protein 2 (349 aa).

Residues 1–28 (MTFLKMKSLSFFFTILLSLSTLFTISNA) form the signal peptide. The Phytocyanin domain maps to 29-130 (RKFNVGGSGA…GQKLNVVVIS (102 aa)). Cys-84 and Cys-118 form a disulfide bridge. The segment at 136–330 (TAQSPHAAAP…GQKKSSANGM (195 aa)) is disordered. Composition is skewed to low complexity over residues 145–201 (PGSS…SPPG) and 224–234 (TSPVSPSSAPM). Residues 249–260 (IPPSSAPMTSPP) show a composition bias toward polar residues. Positions 263 to 312 (MAPKSSSPVSNSPTVSPSLAPGGSTSSSPSDSPSGSAMGPSGDGPSAAGD) are enriched in low complexity. Residue Ser-325 is the site of GPI-anchor amidated serine attachment. Residues 326–349 (SANGMTVMSITTVLSLVLTIFLSA) constitute a propeptide, removed in mature form.

It belongs to the early nodulin-like (ENODL) family. In terms of tissue distribution, mostly expressed in leaves and roots, and, to a lower extent, in seedlings, stems and flowers, but barely in seeds.

Its subcellular location is the cell membrane. Its function is as follows. May act as a carbohydrate transporter. The chain is Early nodulin-like protein 2 from Arabidopsis thaliana (Mouse-ear cress).